A 405-amino-acid chain; its full sequence is Deoxyguanosinetriphosphate triphosphohydrolase-like protein (405 aa).

An HD domain is found at 75 to 219 (RLTHTIEVAQ…AAIADDIAYN (145 aa)).

Belongs to the dGTPase family. Type 2 subfamily.

The polypeptide is Deoxyguanosinetriphosphate triphosphohydrolase-like protein (Rhizobium etli (strain CIAT 652)).